The primary structure comprises 1783 residues: uncharacterized protein (1783 aa).

Residues 16–36 (FFLLFGIIFVLFSIIFLETSI) form a helical membrane-spanning segment. Residues 105–119 (GSDSGQSNGSGDNQN) are compositionally biased toward low complexity. The disordered stretch occupies residues 105–125 (GSDSGQSNGSGDNQNKTIPRK). The next 8 membrane-spanning stretches (helical) occupy residues 917–937 (VSTV…ILLI), 967–987 (VFAG…AFLL), 1010–1030 (WLSF…ISWI), 1084–1104 (LFTY…AGTI), 1660–1680 (FLLG…GISM), 1709–1729 (FIPA…GVLI), 1730–1750 (GIQA…FEFL), and 1752–1772 (YMVG…YFWI).

It belongs to the ABC-4 integral membrane protein family.

Its subcellular location is the cell membrane. This is an uncharacterized protein from Mycoplasma genitalium (strain ATCC 33530 / DSM 19775 / NCTC 10195 / G37) (Mycoplasmoides genitalium).